Here is a 188-residue protein sequence, read N- to C-terminus: uncharacterized protein (188 aa).

The tract at residues 121-142 is disordered; it reads ADTLSRKNKRSSDQKRNGQHFE. The span at 130 to 142 shows a compositional bias: basic and acidic residues; the sequence is RSSDQKRNGQHFE.

Belongs to the chlamydial CPn_0422/CT_273/TC_0545 family.

This is an uncharacterized protein from Chlamydia trachomatis serovar D (strain ATCC VR-885 / DSM 19411 / UW-3/Cx).